The primary structure comprises 201 residues: Large ribosomal subunit protein uL4 (201 aa).

The interval 45-71 (AQKTRAEVTGSGKKPWRQKGTGRARAG) is disordered.

The protein belongs to the universal ribosomal protein uL4 family. In terms of assembly, part of the 50S ribosomal subunit.

Functionally, one of the primary rRNA binding proteins, this protein initially binds near the 5'-end of the 23S rRNA. It is important during the early stages of 50S assembly. It makes multiple contacts with different domains of the 23S rRNA in the assembled 50S subunit and ribosome. Forms part of the polypeptide exit tunnel. This Shewanella oneidensis (strain ATCC 700550 / JCM 31522 / CIP 106686 / LMG 19005 / NCIMB 14063 / MR-1) protein is Large ribosomal subunit protein uL4.